We begin with the raw amino-acid sequence, 1204 residues long: Major DNA-binding protein (1204 aa).

Positions 289 to 314 (SGTTTARGARRNDVNSTSKPSPSGGF) are disordered. A zinc finger spans residues 497–510 (CSLCEKHTRPVCAH). 2 consecutive short sequence motifs (required for filament formation) follow at residues 841-842 (FW) and 1146-1148 (FNF). The tract at residues 1177 to 1204 (LKRPPEDDELFDLSGIPIKHGNITMEMI) is required for nuclear localization.

Belongs to the herpesviridae major DNA-binding protein family. In terms of assembly, homooligomers. Forms double-helical filaments necessary for the formation of replication compartments within the host nucleus. Interacts with the origin-binding protein. Interacts with the helicase primase complex; this interaction stimulates primer synthesis activity of the helicase-primase complex. Interacts with the DNA polymerase. Interacts with the alkaline exonuclease; this interaction increases its nuclease processivity.

It is found in the host nucleus. Functionally, plays several crucial roles in viral infection. Participates in the opening of the viral DNA origin to initiate replication by interacting with the origin-binding protein. May disrupt loops, hairpins and other secondary structures present on ssDNA to reduce and eliminate pausing of viral DNA polymerase at specific sites during elongation. Promotes viral DNA recombination by performing strand-transfer, characterized by the ability to transfer a DNA strand from a linear duplex to a complementary single-stranded DNA circle. Can also catalyze the renaturation of complementary single strands. Additionally, reorganizes the host cell nucleus, leading to the formation of prereplicative sites and replication compartments. This process is driven by the protein which can form double-helical filaments in the absence of DNA. The sequence is that of Major DNA-binding protein from Homo sapiens (Human).